A 337-amino-acid polypeptide reads, in one-letter code: 4-hydroxyproline 2-epimerase (337 aa).

Residue Cys91 is the Proton acceptor of the active site. Residues 92–93, Asp252, and 257–258 contribute to the substrate site; these read GH and GT.

This sequence belongs to the proline racemase family.

The catalysed reaction is trans-4-hydroxy-L-proline = cis-4-hydroxy-D-proline. Catalyzes the epimerization of trans-4-hydroxy-L-proline (t4LHyp) to cis-4-hydroxy-D-proline (c4DHyp). Is likely involved in a degradation pathway that converts t4LHyp to alpha-ketoglutarate. Displays no proline racemase activity. This chain is 4-hydroxyproline 2-epimerase, found in Cereibacter sphaeroides (strain ATCC 17029 / ATH 2.4.9) (Rhodobacter sphaeroides).